The chain runs to 252 residues: 3-dehydroquinate dehydratase (252 aa).

3-dehydroquinate-binding positions include Ser-21, 46–48, and Arg-82; that span reads EWR. Catalysis depends on His-143, which acts as the Proton donor/acceptor. The active-site Schiff-base intermediate with substrate is the Lys-170. The 3-dehydroquinate site is built by Arg-213, Ser-232, and Gln-236.

Belongs to the type-I 3-dehydroquinase family. Homodimer.

It carries out the reaction 3-dehydroquinate = 3-dehydroshikimate + H2O. It participates in metabolic intermediate biosynthesis; chorismate biosynthesis; chorismate from D-erythrose 4-phosphate and phosphoenolpyruvate: step 3/7. Involved in the third step of the chorismate pathway, which leads to the biosynthesis of aromatic amino acids. Catalyzes the cis-dehydration of 3-dehydroquinate (DHQ) and introduces the first double bond of the aromatic ring to yield 3-dehydroshikimate. This chain is 3-dehydroquinate dehydratase, found in Escherichia coli O6:K15:H31 (strain 536 / UPEC).